Here is a 370-residue protein sequence, read N- to C-terminus: Protein-tyrosine sulfotransferase 1 (370 aa).

Topologically, residues 1–8 are cytoplasmic; that stretch reads MVGKLKQN. The helical; Signal-anchor for type II membrane protein transmembrane segment at 9-25 threads the bilayer; the sequence is LLLACLVISSVTVFYLG. The Lumenal portion of the chain corresponds to 26–370; that stretch reads QHAMECHHRI…KEKPQTEQVE (345 aa). Asn-60 is a glycosylation site (N-linked (GlcNAc...) asparagine). 79–83 is a binding site for 3'-phosphoadenylyl sulfate; the sequence is RSGTT. A disulfide bond links Cys-97 and Cys-157. The Proton donor/acceptor role is filled by Glu-100. An interaction with peptide substrate region spans residues 102-106; the sequence is RVIPR. 3 residues coordinate 3'-phosphoadenylyl sulfate: Arg-184, Ser-192, and Arg-196. A disulfide bond links Cys-226 and Cys-234. Tyr-239 is a binding site for 3'-phosphoadenylyl sulfate. Residue Asn-262 is glycosylated (N-linked (GlcNAc...) asparagine). 3'-phosphoadenylyl sulfate-binding positions include 286–295 and Lys-301; that span reads STDQVIKPVN.

The protein belongs to the protein sulfotransferase family. In terms of assembly, homodimer. Can also form heterodimers with TPST2. In terms of processing, N-glycosylated. In terms of tissue distribution, ubiquitous. Detected in heart, brain, placenta, lung, liver, skeletal muscle, kidney and pancreas.

It localises to the golgi apparatus membrane. It carries out the reaction L-tyrosyl-[protein] + 3'-phosphoadenylyl sulfate = O-sulfo-L-tyrosine-[protein] + adenosine 3',5'-bisphosphate + H(+). Catalyzes the O-sulfation of tyrosine residues within acidic motifs of polypeptides, using 3'-phosphoadenylyl sulfate (PAPS) as cosubstrate. This is Protein-tyrosine sulfotransferase 1 (TPST1) from Homo sapiens (Human).